A 344-amino-acid polypeptide reads, in one-letter code: MAQKENAYPWPYGRQTAQPGLNTLPQRVLRKEPVTPSALVLMSRSNAQPTAAPGQKVVENSSGTPNIPKRSFTIDDFEIGRPLGKGKFGNVYLAREKKSHFIVALKVLFKSQIEKEGVEHQLRREIEIQAHLQHPNILRLYNYFYDRRRIYLILEYAPRGELYKELQKSRTFDEQRTATIMEELADALTYCHAKKVIHRDIKPENLLLGLRGELKIADFGWSVHAPSLRRKTMCGTLDYLPPEMIEGRTHNEKVDLWCIGVLCYELLVGNPPFESASHNETYRRIVKVDLKFPPSVPLGAQDFIYKLLKHNPSERLPLAQVSAHPWVRTHSRRVLPPSAPQSVP.

The residue at position 35 (Thr35) is a Phosphothreonine. The segment at 46–65 (NAQPTAAPGQKVVENSSGTP) is disordered. Residue Ser62 is modified to Phosphoserine. Thr64 carries the phosphothreonine modification. Residues 77-327 (FEIGRPLGKG…LAQVSAHPWV (251 aa)) form the Protein kinase domain. ATP is bound by residues 83–91 (LGKGKFGNV) and Lys106. Asp200 serves as the catalytic Proton acceptor. Lys215 bears the N6-acetyllysine mark. Ser227 is modified (phosphoserine). Thr232 carries the phosphothreonine; by autocatalysis modification.

This sequence belongs to the protein kinase superfamily. Ser/Thr protein kinase family. Aurora subfamily. As to quaternary structure, component of the chromosomal passenger complex (CPC) composed of at least BIRC5/survivin, CDCA8/borealin, INCENP, AURKB or AURKC; predominantly independent AURKB- and AURKC-containing complexes exist. Associates with RACGAP1 during M phase. Interacts with SPDYC; this interaction may be required for proper localization of active, Thr-232-phosphorylated AURKB form during prometaphase and metaphase. Interacts with p53/TP53. Interacts (via the middle kinase domain) with NOC2L (via the N- and C-terminus domains). Interacts with CDCA1. Interacts with EVI5. Interacts with JTB. Interacts with NDC80. Interacts with PSMA3. Interacts with RNF2/RING1B. Interacts with SEPTIN1. Interacts with SIRT2. Interacts with TACC1. Interacts with TTC28. The phosphorylation of Thr-232 requires the binding to INCENP and occurs by means of an autophosphorylation mechanism. Thr-232 phosphorylation is indispensable for the AURKB kinase activity. Post-translationally, acetylated at Lys-215 by KAT5 at kinetochores, increasing AURKB activity and promoting accurate chromosome segregation in mitosis. In terms of processing, ubiquitinated by different BCR (BTB-CUL3-RBX1) E3 ubiquitin ligase complexes. Ubiquitinated by the BCR(KLHL9-KLHL13) E3 ubiquitin ligase complex, ubiquitination leads to removal from mitotic chromosomes and is required for cytokinesis. During anaphase, the BCR(KLHL21) E3 ubiquitin ligase complex recruits the CPC complex from chromosomes to the spindle midzone and mediates the ubiquitination of AURKB. Ubiquitination of AURKB by BCR(KLHL21) E3 ubiquitin ligase complex may not lead to its degradation by the proteasome. Deubiquitinated by USP35; inhibiting CDH1-mediated degradation of AURKB.

The protein localises to the nucleus. The protein resides in the chromosome. It localises to the centromere. It is found in the kinetochore. Its subcellular location is the cytoplasm. The protein localises to the cytoskeleton. The protein resides in the spindle. It localises to the midbody. The enzyme catalyses L-seryl-[protein] + ATP = O-phospho-L-seryl-[protein] + ADP + H(+). It catalyses the reaction L-threonyl-[protein] + ATP = O-phospho-L-threonyl-[protein] + ADP + H(+). Activity is greatly increased when AURKB is within the CPC complex. In particular, AURKB-phosphorylated INCENP acts as an activator of AURKB. Positive feedback between HASPIN and AURKB contributes to CPC localization. Functionally, serine/threonine-protein kinase component of the chromosomal passenger complex (CPC), a complex that acts as a key regulator of mitosis. The CPC complex has essential functions at the centromere in ensuring correct chromosome alignment and segregation and is required for chromatin-induced microtubule stabilization and spindle assembly. Involved in the bipolar attachment of spindle microtubules to kinetochores and is a key regulator for the onset of cytokinesis during mitosis. Required for central/midzone spindle assembly and cleavage furrow formation. Key component of the cytokinesis checkpoint, a process required to delay abscission to prevent both premature resolution of intercellular chromosome bridges and accumulation of DNA damage: phosphorylates CHMP4C, leading to retain abscission-competent VPS4 (VPS4A and/or VPS4B) at the midbody ring until abscission checkpoint signaling is terminated at late cytokinesis. AURKB phosphorylates the CPC complex subunits BIRC5/survivin, CDCA8/borealin and INCENP. Phosphorylation of INCENP leads to increased AURKB activity. Other known AURKB substrates involved in centromeric functions and mitosis are CENPA, DES/desmin, GPAF, KIF2C, NSUN2, RACGAP1, SEPTIN1, VIM/vimentin, HASPIN, and histone H3. A positive feedback loop involving HASPIN and AURKB contributes to localization of CPC to centromeres. Phosphorylation of VIM controls vimentin filament segregation in cytokinetic process, whereas histone H3 is phosphorylated at 'Ser-10' and 'Ser-28' during mitosis (H3S10ph and H3S28ph, respectively). AURKB is also required for kinetochore localization of BUB1 and SGO1. Phosphorylation of p53/TP53 negatively regulates its transcriptional activity. Key regulator of active promoters in resting B- and T-lymphocytes: acts by mediating phosphorylation of H3S28ph at active promoters in resting B-cells, inhibiting RNF2/RING1B-mediated ubiquitination of histone H2A and enhancing binding and activity of the USP16 deubiquitinase at transcribed genes. Acts as an inhibitor of CGAS during mitosis: catalyzes phosphorylation of the N-terminus of CGAS during the G2-M transition, blocking CGAS liquid phase separation and activation, and thereby preventing CGAS-induced autoimmunity. Phosphorylates KRT5 during anaphase and telophase. Phosphorylates ATXN10 which promotes phosphorylation of ATXN10 by PLK1 and may play a role in the regulation of cytokinesis and stimulating the proteasomal degradation of ATXN10. The chain is Aurora kinase B (AURKB) from Bos taurus (Bovine).